A 622-amino-acid chain; its full sequence is Putative DEAD-box ATP-dependent RNA helicase 44 (622 aa).

Residues 50-97 are disordered; it reads DRRSIVQISRSNSDNDDGNRPRDVKRERHRSHDHDRNRESDREFRERE. Residues 66 to 97 show a composition bias toward basic and acidic residues; it reads DGNRPRDVKRERHRSHDHDRNRESDREFRERE. Residues 241–436 enclose the Helicase ATP-binding domain; sequence IPLGLEQRDV…RKFLRNPVVV (196 aa). 254–261 is an ATP binding site; the sequence is SATGSGKT. Residues 367–370 carry the DEAD box motif; it reads DEAD. The Helicase C-terminal domain maps to 460–606; it reads RLKKLIDDLG…LVPPELARHE (147 aa).

This sequence belongs to the DEAD box helicase family. DDX23/PRP28 subfamily.

It catalyses the reaction ATP + H2O = ADP + phosphate + H(+). This is Putative DEAD-box ATP-dependent RNA helicase 44 (RH44) from Arabidopsis thaliana (Mouse-ear cress).